Consider the following 72-residue polypeptide: DNA-directed RNA polymerase subunit omega (72 aa).

The protein belongs to the RNA polymerase subunit omega family. The RNAP catalytic core consists of 2 alpha, 1 beta, 1 beta' and 1 omega subunit. When a sigma factor is associated with the core the holoenzyme is formed, which can initiate transcription.

It carries out the reaction RNA(n) + a ribonucleoside 5'-triphosphate = RNA(n+1) + diphosphate. In terms of biological role, promotes RNA polymerase assembly. Latches the N- and C-terminal regions of the beta' subunit thereby facilitating its interaction with the beta and alpha subunits. The chain is DNA-directed RNA polymerase subunit omega from Francisella tularensis subsp. holarctica (strain LVS).